The sequence spans 309 residues: NADH-cytochrome b5 reductase 1 (309 aa).

The helical transmembrane segment at 29–49 threads the bilayer; the sequence is EFVPYAVALTAVLAGFKLFTG. The FAD-binding FR-type domain maps to 60–165; it reads TEFQEFVLKE…RGPKGAMVYT (106 aa). FAD contacts are provided by residues 145–160 and 171–208; these read TTLK…GPKG and HIGM…KVDL.

This sequence belongs to the flavoprotein pyridine nucleotide cytochrome reductase family. As to quaternary structure, monomer. Component of the 2-(3-amino-3-carboxypropyl)histidine synthase complex composed of dph1, dph2, dph3 and a NADH-dependent reductase, predominantly cbr1. It depends on FAD as a cofactor.

Its subcellular location is the mitochondrion outer membrane. The catalysed reaction is 2 Fe(III)-[cytochrome b5] + NADH = 2 Fe(II)-[cytochrome b5] + NAD(+) + H(+). It carries out the reaction 2 Fe(3+)-[Dph3] + NADH = 2 Fe(2+)-[Dph3] + NAD(+) + H(+). It participates in protein modification; peptidyl-diphthamide biosynthesis. In terms of biological role, NADH-dependent reductase for dph3 and cytochrome b5. Required for the first step of diphthamide biosynthesis, a post-translational modification of histidine which occurs in elongation factor 2. Dph1 and dph2 transfer a 3-amino-3-carboxypropyl (ACP) group from S-adenosyl-L-methionine (SAM) to a histidine residue, the reaction is assisted by a reduction system comprising dph3 and a NADH-dependent reductase, predominantly cbr1. By reducing dph3, also involved in the formation of the tRNA wobble base modification mcm5s 2U (5-methoxycarbonylmethyl-2-thiouridine), mediated by the elongator complex. The cytochrome b5/NADH cytochrome b5 reductase electron transfer system supports the catalytic activity of several sterol biosynthetic enzymes. The sequence is that of NADH-cytochrome b5 reductase 1 (cbr1) from Aspergillus clavatus (strain ATCC 1007 / CBS 513.65 / DSM 816 / NCTC 3887 / NRRL 1 / QM 1276 / 107).